Here is a 274-residue protein sequence, read N- to C-terminus: Undecaprenyl-diphosphatase (274 aa).

7 helical membrane passes run Ile4–Ile24, Leu46–Tyr63, Lys82–Gly102, Leu109–Ala129, Ala184–Leu204, Met218–Leu238, and Phe249–Val269.

This sequence belongs to the UppP family.

It is found in the cell inner membrane. The catalysed reaction is di-trans,octa-cis-undecaprenyl diphosphate + H2O = di-trans,octa-cis-undecaprenyl phosphate + phosphate + H(+). Its function is as follows. Catalyzes the dephosphorylation of undecaprenyl diphosphate (UPP). Confers resistance to bacitracin. In Dechloromonas aromatica (strain RCB), this protein is Undecaprenyl-diphosphatase.